A 65-amino-acid chain; its full sequence is MIVPVRCFTCGKVIGDKYYEFKARVEKGEDPEKVLDDLGVERYCCRRTLLSHVELIDQVMVYKVY.

Zn(2+) is bound by residues Cys-7, Cys-10, Cys-44, and Cys-45.

This sequence belongs to the archaeal Rpo10/eukaryotic RPB10 RNA polymerase subunit family. Part of the RNA polymerase complex. Requires Zn(2+) as cofactor.

The protein resides in the cytoplasm. It carries out the reaction RNA(n) + a ribonucleoside 5'-triphosphate = RNA(n+1) + diphosphate. Its function is as follows. DNA-dependent RNA polymerase (RNAP) catalyzes the transcription of DNA into RNA using the four ribonucleoside triphosphates as substrates. The polypeptide is DNA-directed RNA polymerase subunit Rpo10 (Thermococcus onnurineus (strain NA1)).